Reading from the N-terminus, the 238-residue chain is Capsular polysaccharide phosphotransferase eps5J (238 aa).

Belongs to the stealth family.

The protein is Capsular polysaccharide phosphotransferase eps5J (eps5J) of Streptococcus thermophilus.